Here is a 349-residue protein sequence, read N- to C-terminus: NADH-quinone oxidoreductase subunit H (349 aa).

Transmembrane regions (helical) follow at residues 19–39, 88–108, 123–143, 161–181, 202–222, 249–269, 284–304, and 325–345; these read VWTL…VAYL, GLFI…WAVV, LLFL…AGWA, VSYE…SASL, FLSW…ISGI, GMAF…VSIL, FLPD…FVFL, and VFIP…MSPL.

The protein belongs to the complex I subunit 1 family. As to quaternary structure, NDH-1 is composed of 14 different subunits. Subunits NuoA, H, J, K, L, M, N constitute the membrane sector of the complex.

Its subcellular location is the cell inner membrane. The enzyme catalyses a quinone + NADH + 5 H(+)(in) = a quinol + NAD(+) + 4 H(+)(out). NDH-1 shuttles electrons from NADH, via FMN and iron-sulfur (Fe-S) centers, to quinones in the respiratory chain. The immediate electron acceptor for the enzyme in this species is believed to be ubiquinone. Couples the redox reaction to proton translocation (for every two electrons transferred, four hydrogen ions are translocated across the cytoplasmic membrane), and thus conserves the redox energy in a proton gradient. This subunit may bind ubiquinone. This is NADH-quinone oxidoreductase subunit H from Aromatoleum aromaticum (strain DSM 19018 / LMG 30748 / EbN1) (Azoarcus sp. (strain EbN1)).